The primary structure comprises 496 residues: Pituitary adenylate cyclase-activating polypeptide type I receptor (496 aa).

Positions 1 to 20 (MARTLQLSLTALLLLPMAIA) are cleaved as a signal peptide. Residues 21-152 (MHSDCIFKKE…SGDQDYYYLS (132 aa)) lie on the Extracellular side of the membrane. 3 disulfides stabilise this stretch: Cys-34-Cys-63, Cys-54-Cys-118, and Cys-77-Cys-134. N-linked (GlcNAc...) asparagine glycosylation is found at Asn-48, Asn-60, and Asn-117. An important for ADCYAP1/PACAP ligand binding and specificity region spans residues 125-139 (EPFPHYFDACGFDDY). The interval 125–139 (EPFPHYFDACGFDDY) is important for ligand binding and specificity. A helical membrane pass occupies residues 153–177 (VKALYTVGYSTSLVTLTTAMVILCR). Residues 178-187 (FRKLHCTRNF) are Cytoplasmic-facing. A helical transmembrane segment spans residues 188 to 208 (IHMNLFVSFMLRAISVFIKDW). At 209–223 (ILYAEQDSSHCFVST) the chain is on the extracellular side. A helical membrane pass occupies residues 224-249 (VECKAVMVFFHYCVVSNYFWLFIEGL). A disulfide bond links Cys-226 and Cys-296. Residues 250 to 267 (YLFTLLVETFFPERRYFY) are Cytoplasmic-facing. The chain crosses the membrane as a helical span at residues 268 to 290 (WYTIIGWGTPTVCVTVWAVLRLY). Topologically, residues 291–302 (FDDAGCWDMNDS) are extracellular. The chain crosses the membrane as a helical span at residues 303-329 (TALWWVIKGPVVGSIMVNFVLFIGIII). The Cytoplasmic segment spans residues 330–347 (ILVQKLQSPDMGGNESSI). The helical transmembrane segment at 348-402 (YFSCVQKCYCKPQRAQQHSCKMSELSTITLRLARSTLLLIPLFGIHYTVFAFSPE) threads the bilayer. Topologically, residues 403–407 (NVSKR) are extracellular. Residues 408–431 (ERLVFELGLGSFQGFVVAVLYCFL) form a helical membrane-spanning segment. Topologically, residues 432–496 (NGEVQAEIKR…SSLPADNLAT (65 aa)) are cytoplasmic. Residues Ser-462 and Ser-475 each carry the phosphoserine modification.

It belongs to the G-protein coupled receptor 2 family. In terms of assembly, interacts with maxadilan, a vasodilator peptide from Lutzomyia longipalpis saliva; the interaction results in ADCYAP1R1 activation.

The protein localises to the cell membrane. Its function is as follows. G protein-coupled receptor activated by the neuropeptide pituitary adenylate cyclase-activating polypeptide (ADCYAP1/PACAP). Binds both PACAP27 and PACAP38 bioactive peptides. Ligand binding causes a conformation change that triggers signaling via guanine nucleotide-binding proteins (G proteins) and modulates the activity of downstream effectors. Activates cAMP-dependent pathway. May regulate the release of adrenocorticotropin, luteinizing hormone, growth hormone, prolactin, epinephrine, and catecholamine. May play a role in spermatogenesis and sperm motility. Causes smooth muscle relaxation and secretion in the gastrointestinal tract. This chain is Pituitary adenylate cyclase-activating polypeptide type I receptor, found in Mus musculus (Mouse).